Here is a 338-residue protein sequence, read N- to C-terminus: Tetraacyldisaccharide 4'-kinase (338 aa).

63 to 70 (TVGGAGKT) contributes to the ATP binding site.

Belongs to the LpxK family.

The enzyme catalyses a lipid A disaccharide + ATP = a lipid IVA + ADP + H(+). Its pathway is glycolipid biosynthesis; lipid IV(A) biosynthesis; lipid IV(A) from (3R)-3-hydroxytetradecanoyl-[acyl-carrier-protein] and UDP-N-acetyl-alpha-D-glucosamine: step 6/6. Transfers the gamma-phosphate of ATP to the 4'-position of a tetraacyldisaccharide 1-phosphate intermediate (termed DS-1-P) to form tetraacyldisaccharide 1,4'-bis-phosphate (lipid IVA). The chain is Tetraacyldisaccharide 4'-kinase from Hahella chejuensis (strain KCTC 2396).